Here is a 174-residue protein sequence, read N- to C-terminus: Large ribosomal subunit protein uL10 (174 aa).

Belongs to the universal ribosomal protein uL10 family. As to quaternary structure, part of the ribosomal stalk of the 50S ribosomal subunit. The N-terminus interacts with L11 and the large rRNA to form the base of the stalk. The C-terminus forms an elongated spine to which L12 dimers bind in a sequential fashion forming a multimeric L10(L12)X complex.

Functionally, forms part of the ribosomal stalk, playing a central role in the interaction of the ribosome with GTP-bound translation factors. This chain is Large ribosomal subunit protein uL10, found in Geotalea uraniireducens (strain Rf4) (Geobacter uraniireducens).